A 512-amino-acid chain; its full sequence is 2-isopropylmalate synthase (512 aa).

The Pyruvate carboxyltransferase domain occupies 4-266 (IQFFDTTLRD…ETNIVLNQFK (263 aa)). Residues aspartate 13, histidine 201, histidine 203, and asparagine 237 each contribute to the Mn(2+) site. Residues 390-512 (ELKHLQVQYV…SKQADFEEVK (123 aa)) form a regulatory domain region.

Belongs to the alpha-IPM synthase/homocitrate synthase family. LeuA type 1 subfamily. In terms of assembly, homodimer. Requires Mn(2+) as cofactor.

Its subcellular location is the cytoplasm. It carries out the reaction 3-methyl-2-oxobutanoate + acetyl-CoA + H2O = (2S)-2-isopropylmalate + CoA + H(+). It functions in the pathway amino-acid biosynthesis; L-leucine biosynthesis; L-leucine from 3-methyl-2-oxobutanoate: step 1/4. Catalyzes the condensation of the acetyl group of acetyl-CoA with 3-methyl-2-oxobutanoate (2-ketoisovalerate) to form 3-carboxy-3-hydroxy-4-methylpentanoate (2-isopropylmalate). The polypeptide is 2-isopropylmalate synthase (Listeria innocua serovar 6a (strain ATCC BAA-680 / CLIP 11262)).